A 127-amino-acid polypeptide reads, in one-letter code: Fluoride-specific ion channel FluC (127 aa).

Transmembrane regions (helical) follow at residues 4–24 (LLLAVFIGGGTGSVARWMLSM), 35–55 (LGTLAANLLGAFIIGMGFAWF), 71–91 (TGFCGGLTTFSTFSAEVVFLL), and 103–123 (VLVNLLGSFAMTALAFWIFSA). Na(+) contacts are provided by G75 and T78.

Belongs to the fluoride channel Fluc/FEX (TC 1.A.43) family.

The protein localises to the cell inner membrane. The catalysed reaction is fluoride(in) = fluoride(out). With respect to regulation, na(+) is not transported, but it plays an essential structural role and its presence is essential for fluoride channel function. In terms of biological role, fluoride-specific ion channel. Important for reducing fluoride concentration in the cell, thus reducing its toxicity. The chain is Fluoride-specific ion channel FluC from Escherichia fergusonii (strain ATCC 35469 / DSM 13698 / CCUG 18766 / IAM 14443 / JCM 21226 / LMG 7866 / NBRC 102419 / NCTC 12128 / CDC 0568-73).